A 103-amino-acid chain; its full sequence is Movement protein TGB2 (103 aa).

Over 1 to 8 (MSFAPPPD) the chain is Cytoplasmic. A helical transmembrane segment spans residues 9–29 (YSKIYLALGCGLGLGFVVYAS). The Lumenal segment spans residues 30 to 70 (RVNHLPHVGDNTHNLPHGGQYCDGNKRVLYSGPKSGSSPTN). The helical transmembrane segment at 71 to 91 (NLWPFITVIALTLAILLTSCP) threads the bilayer. The Cytoplasmic portion of the chain corresponds to 92–103 (RRRVCIRCSQHH).

Belongs to the Tymovirales TGBp2 protein family.

The protein localises to the host endoplasmic reticulum membrane. In terms of biological role, plays a role in viral cell-to-cell propagation, by facilitating genome transport to neighboring plant cells through plasmosdesmata,. The polypeptide is Movement protein TGB2 (Allium cepa var. aggregatum (Shallot)).